The sequence spans 304 residues: Phosphoribosylaminoimidazole-succinocarboxamide synthase (304 aa).

The protein belongs to the SAICAR synthetase family.

It catalyses the reaction 5-amino-1-(5-phospho-D-ribosyl)imidazole-4-carboxylate + L-aspartate + ATP = (2S)-2-[5-amino-1-(5-phospho-beta-D-ribosyl)imidazole-4-carboxamido]succinate + ADP + phosphate + 2 H(+). Its pathway is purine metabolism; IMP biosynthesis via de novo pathway; 5-amino-1-(5-phospho-D-ribosyl)imidazole-4-carboxamide from 5-amino-1-(5-phospho-D-ribosyl)imidazole-4-carboxylate: step 1/2. The protein is Phosphoribosylaminoimidazole-succinocarboxamide synthase (ADE1) of Komagataella pastoris (Yeast).